The sequence spans 293 residues: tRNA pseudouridine synthase B (293 aa).

Catalysis depends on Asp39, which acts as the Nucleophile.

The protein belongs to the pseudouridine synthase TruB family. Type 1 subfamily.

It catalyses the reaction uridine(55) in tRNA = pseudouridine(55) in tRNA. Functionally, responsible for synthesis of pseudouridine from uracil-55 in the psi GC loop of transfer RNAs. The protein is tRNA pseudouridine synthase B of Streptococcus thermophilus (strain CNRZ 1066).